The following is a 484-amino-acid chain: uncharacterized protein (484 aa).

A run of 12 helical transmembrane segments spans residues 19 to 39 (LSFGVGITLWALIVFAYMIFV), 78 to 98 (VNWGITIGRGIGSVLVGWLIV), 111 to 131 (FFMLFGIIAPYSPTYAGFIIL), 134 to 154 (IFAIGGTMQIILIQPVVSNYL), 165 to 185 (FSPFFYPIGTIITLIPFAGII), 199 to 219 (IVFLVIGLLTLIPLIGYIILG), 249 to 269 (TWYWTILYGSWLVAVVFPFTF), 289 to 309 (ISVFLIFFLAGMFLGPFTIGL), 321 to 341 (ISTIITLGVFFYVLATVVFVL), 360 to 380 (LFLFLGLFMGICLWGIQGVML), 398 to 418 (FGLIWGLGYTAFTIATIITSL), and 440 to 460 (LGAYILIIIFSLVSSIGLALL).

It localises to the cell membrane. This is an uncharacterized protein from Mesomycoplasma hyopneumoniae (strain 232) (Mycoplasma hyopneumoniae).